The primary structure comprises 725 residues: ABC transporter G family member 19 (725 aa).

The ABC transporter domain occupies 73 to 325; sequence LNFNNLQYDV…FSDFGRPIPE (253 aa). 117–124 provides a ligand contact to ATP; it reads GASGAGKS. An ABC transmembrane type-2 domain is found at 419–629; sequence FETFILAKRY…PYEAVLINEF (211 aa). 7 consecutive transmembrane segments (helical) span residues 438 to 458, 473 to 493, 515 to 535, 537 to 557, 577 to 597, 606 to 626, and 698 to 718; these read LVGTRIATVMVTGCLLATVYW, LFAFVVPTMFYCCLDNVPVFI, ISHSLVSLPQLLAPSLVFSAI, FWTVGLSGGLEGFVFYCLLIY, IMLCYMVSITYLAYCLLLSGF, FYWTWFHYISILKYPYEAVLI, and LWITFASGLFFRILFYFALLF.

It belongs to the ABC transporter superfamily. ABCG family. Eye pigment precursor importer (TC 3.A.1.204) subfamily.

The protein resides in the vacuole membrane. Confers selective resistance to kanamycin. In Arabidopsis thaliana (Mouse-ear cress), this protein is ABC transporter G family member 19 (ABCG19).